Here is a 158-residue protein sequence, read N- to C-terminus: uncharacterized protein (158 aa).

This is an uncharacterized protein from Archaeoglobus fulgidus (strain ATCC 49558 / DSM 4304 / JCM 9628 / NBRC 100126 / VC-16).